The primary structure comprises 256 residues: Hydroxyethylthiazole kinase (256 aa).

Methionine 38 lines the substrate pocket. ATP contacts are provided by threonine 114 and threonine 159. Residue glycine 186 coordinates substrate.

Belongs to the Thz kinase family. The cofactor is Mg(2+).

The catalysed reaction is 5-(2-hydroxyethyl)-4-methylthiazole + ATP = 4-methyl-5-(2-phosphooxyethyl)-thiazole + ADP + H(+). It functions in the pathway cofactor biosynthesis; thiamine diphosphate biosynthesis; 4-methyl-5-(2-phosphoethyl)-thiazole from 5-(2-hydroxyethyl)-4-methylthiazole: step 1/1. In terms of biological role, catalyzes the phosphorylation of the hydroxyl group of 4-methyl-5-beta-hydroxyethylthiazole (THZ). In Streptococcus agalactiae serotype V (strain ATCC BAA-611 / 2603 V/R), this protein is Hydroxyethylthiazole kinase.